Here is a 605-residue protein sequence, read N- to C-terminus: Capsid scaffolding protein (605 aa).

Catalysis depends on charge relay system residues histidine 48, serine 116, and histidine 139. Positions 235–275 are disordered; it reads ASDAPDLQKPDKALQSPPPASTDPDTMLSGNAGEGATACGG. Positions 281–300 are interaction with pAP; sequence QDLISVPRNTFMTLLQTNLD. Disordered stretches follow at residues 403-432 and 489-588; these read DYVPAPSRSNKRKRDPEEDEEGGGLFPGED and PHQS…KSVS. The Nuclear localization signal signature appears at 410-416; that stretch reads RSNKRKR. The span at 568-579 shows a compositional bias: polar residues; it reads ASASGVAQSKEP. The interaction with major capsid protein stretch occupies residues 585 to 605; sequence KSVSAHLKSIFCEELLNKRVA.

Belongs to the herpesviridae capsid scaffolding protein family. In terms of assembly, homomultimer. Interacts with major capsid protein. Exists in a monomer-dimer equilibrium with the dimer being the active species. Capsid scaffolding protein is cleaved by assemblin after formation of the spherical procapsid. As a result, the capsid obtains its mature, icosahedral shape. Cleavages occur at two or more sites: release (R-site) and maturation (M-site).

It localises to the host cytoplasm. The protein localises to the host nucleus. The enzyme catalyses Cleaves -Ala-|-Ser- and -Ala-|-Ala- bonds in the scaffold protein.. In terms of biological role, acts as a scaffold protein by binding major capsid protein in the cytoplasm, inducing the nuclear localization of both proteins. Multimerizes in the nucleus such as major capsid protein forms the icosahedral T=16 capsid. Autocatalytic cleavage releases the assembly protein, and subsequently abolishes interaction with major capsid protein. Cleavages products are evicted from the capsid before or during DNA packaging. Functionally, protease that plays an essential role in virion assembly within the nucleus. Catalyzes the cleavage of the assembly protein after formation of the spherical procapsid. By that cleavage, the capsid matures and gains its icosahedral shape. The cleavage sites seem to include -Ala-Ser-, -Ala-Ala-, as well as Ala-Thr bonds. Assemblin and cleavages products are evicted from the capsid before or during DNA packaging. Plays a major role in capsid assembly. Acts as a scaffold protein by binding major capsid protein. Multimerizes in the nucleus such as major capsid protein forms the icosahedral T=16 capsid. Cleaved by assemblin after capsid completion. The cleavages products are evicted from the capsid before or during DNA packaging. The polypeptide is Capsid scaffolding protein (Epstein-Barr virus (strain AG876) (HHV-4)).